A 1481-amino-acid polypeptide reads, in one-letter code: DNA-directed RNA polymerase subunit beta'' (1481 aa).

Residues C217, C291, C298, and C301 each coordinate Zn(2+).

Belongs to the RNA polymerase beta' chain family. RpoC2 subfamily. As to quaternary structure, in plastids the minimal PEP RNA polymerase catalytic core is composed of four subunits: alpha, beta, beta', and beta''. When a (nuclear-encoded) sigma factor is associated with the core the holoenzyme is formed, which can initiate transcription. The cofactor is Zn(2+).

It localises to the plastid. Its subcellular location is the chloroplast. It catalyses the reaction RNA(n) + a ribonucleoside 5'-triphosphate = RNA(n+1) + diphosphate. Its function is as follows. DNA-dependent RNA polymerase catalyzes the transcription of DNA into RNA using the four ribonucleoside triphosphates as substrates. In Trieres chinensis (Marine centric diatom), this protein is DNA-directed RNA polymerase subunit beta''.